A 166-amino-acid polypeptide reads, in one-letter code: Small heat shock protein OV25-2 (166 aa).

Residues 38–149 enclose the sHSP domain; that stretch reads LNECNIGNSL…ASRNIPIRAS (112 aa). Residues 140-166 form a disordered region; it reads ASRNIPIRASPKEPEANQKSAINDAKQ.

This sequence belongs to the small heat shock protein (HSP20) family.

This is Small heat shock protein OV25-2 (OV25-2) from Onchocerca volvulus.